The primary structure comprises 299 residues: NAD kinase (299 aa).

Asp-71 functions as the Proton acceptor in the catalytic mechanism. Residues 71-72 (DG), 145-146 (ND), Arg-173, Asp-175, 186-191 (TAYSLS), Ala-210, and Gln-248 contribute to the NAD(+) site.

This sequence belongs to the NAD kinase family. The cofactor is a divalent metal cation.

Its subcellular location is the cytoplasm. It catalyses the reaction NAD(+) + ATP = ADP + NADP(+) + H(+). Functionally, involved in the regulation of the intracellular balance of NAD and NADP, and is a key enzyme in the biosynthesis of NADP. Catalyzes specifically the phosphorylation on 2'-hydroxyl of the adenosine moiety of NAD to yield NADP. This Bordetella pertussis (strain Tohama I / ATCC BAA-589 / NCTC 13251) protein is NAD kinase.